A 275-amino-acid chain; its full sequence is 4-diphosphocytidyl-2-C-methyl-D-erythritol kinase (275 aa).

The active site involves lysine 14. 94–104 is an ATP binding site; that stretch reads PMEAGLGGGSA. The active site involves aspartate 134.

It belongs to the GHMP kinase family. IspE subfamily.

It carries out the reaction 4-CDP-2-C-methyl-D-erythritol + ATP = 4-CDP-2-C-methyl-D-erythritol 2-phosphate + ADP + H(+). Its pathway is isoprenoid biosynthesis; isopentenyl diphosphate biosynthesis via DXP pathway; isopentenyl diphosphate from 1-deoxy-D-xylulose 5-phosphate: step 3/6. Its function is as follows. Catalyzes the phosphorylation of the position 2 hydroxy group of 4-diphosphocytidyl-2C-methyl-D-erythritol. The chain is 4-diphosphocytidyl-2-C-methyl-D-erythritol kinase from Thermosipho africanus (strain TCF52B).